Reading from the N-terminus, the 442-residue chain is D-serine dehydratase (442 aa).

Lys-118 is subject to N6-(pyridoxal phosphate)lysine.

Belongs to the serine/threonine dehydratase family. DsdA subfamily. In terms of assembly, monomer. Pyridoxal 5'-phosphate serves as cofactor.

It catalyses the reaction D-serine = pyruvate + NH4(+). The polypeptide is D-serine dehydratase (Escherichia coli O81 (strain ED1a)).